Consider the following 82-residue polypeptide: Cytochrome b559 subunit alpha (82 aa).

Residues 22–36 traverse the membrane as a helical segment; it reads VIHSITIPALFIAGW. His24 lines the heme pocket.

It belongs to the PsbE/PsbF family. As to quaternary structure, heterodimer of an alpha subunit and a beta subunit. PSII is composed of 1 copy each of membrane proteins PsbA, PsbB, PsbC, PsbD, PsbE, PsbF, PsbH, PsbI, PsbJ, PsbK, PsbL, PsbM, PsbT, PsbX, PsbY, PsbZ, Psb30/Ycf12, peripheral proteins PsbO, CyanoQ (PsbQ), PsbU, PsbV and a large number of cofactors. It forms dimeric complexes. It depends on heme b as a cofactor.

The protein resides in the cellular thylakoid membrane. Functionally, this b-type cytochrome is tightly associated with the reaction center of photosystem II (PSII). PSII is a light-driven water:plastoquinone oxidoreductase that uses light energy to abstract electrons from H(2)O, generating O(2) and a proton gradient subsequently used for ATP formation. It consists of a core antenna complex that captures photons, and an electron transfer chain that converts photonic excitation into a charge separation. The polypeptide is Cytochrome b559 subunit alpha (Trichodesmium erythraeum (strain IMS101)).